A 665-amino-acid chain; its full sequence is DNA ligase (665 aa).

NAD(+) is bound by residues 34-38 (DEEYD), 83-84 (SL), and Glu-114. Lys-116 (N6-AMP-lysine intermediate) is an active-site residue. 4 residues coordinate NAD(+): Arg-137, Glu-171, Lys-287, and Lys-311. Positions 405, 408, 424, and 429 each coordinate Zn(2+). Residues 587–665 (KKSSKLAGLT…EDEFKKMIID (79 aa)) enclose the BRCT domain.

This sequence belongs to the NAD-dependent DNA ligase family. LigA subfamily. Mg(2+) serves as cofactor. Requires Mn(2+) as cofactor.

It catalyses the reaction NAD(+) + (deoxyribonucleotide)n-3'-hydroxyl + 5'-phospho-(deoxyribonucleotide)m = (deoxyribonucleotide)n+m + AMP + beta-nicotinamide D-nucleotide.. Functionally, DNA ligase that catalyzes the formation of phosphodiester linkages between 5'-phosphoryl and 3'-hydroxyl groups in double-stranded DNA using NAD as a coenzyme and as the energy source for the reaction. It is essential for DNA replication and repair of damaged DNA. The chain is DNA ligase from Thermosipho africanus (strain TCF52B).